Reading from the N-terminus, the 211-residue chain is Small ribosomal subunit protein uS4 (211 aa).

The tract at residues Gly-27–Arg-48 is disordered. Positions Arg-99–Glu-162 constitute an S4 RNA-binding domain.

This sequence belongs to the universal ribosomal protein uS4 family. As to quaternary structure, part of the 30S ribosomal subunit. Contacts protein S5. The interaction surface between S4 and S5 is involved in control of translational fidelity.

Its function is as follows. One of the primary rRNA binding proteins, it binds directly to 16S rRNA where it nucleates assembly of the body of the 30S subunit. In terms of biological role, with S5 and S12 plays an important role in translational accuracy. This Herpetosiphon aurantiacus (strain ATCC 23779 / DSM 785 / 114-95) protein is Small ribosomal subunit protein uS4.